Reading from the N-terminus, the 189-residue chain is High affinity copper uptake protein 1 (189 aa).

The Extracellular portion of the chain corresponds to M1–E67. Positions M13 to M18 match the Methionine segments (Mets) motif motif. Positions M15–S36 are disordered. Low complexity predominate over residues H20–S36. The chain crosses the membrane as a helical span at residues M68–A88. The Cytoplasmic segment spans residues R89–H131. T113 carries the post-translational modification Phosphothreonine. A helical transmembrane segment spans residues L132–F152. Residues M153 to Y155 lie on the Extracellular side of the membrane. The helical transmembrane segment at N156–W176 threads the bilayer. Over K177 to H189 the chain is Cytoplasmic. Position 188 is a cysteine sulfenic acid (-SOH) (C188).

Belongs to the copper transporter (Ctr) (TC 1.A.56) family. SLC31A subfamily. In terms of assembly, homotrimer; is stabilized by cisplatin via interactions between cisplatin and the methionine-rich clusters, and could be crucial for the copper(2+) reduction process and copper(1+) stabilization. Heterotrimer between SLC31A1, CCS and SOD1; this heterotrimer is copper(1+)-mediated and its maintenance is regulated through SOD1 activation. Interacts with KDR; this interaction is induced upon VEGFA stimulation leading to SLC31A1 and KDR subsequent co-internalization to early endosomes, thereby activating KDR downstream signaling in endothelial cells. Interacts (via C-terminal domain) with ATOX1 (via dimer form); this interaction improves ATOX1 stability and controls intracellular copper(1+) levels. Interacts with SLC31A2; this interaction stabilizes SLC31A2 and protects its from ubiquitination and degradation. Interacts (via C-terminal domain) with CCS; this interaction is copper(1+)-mediated. Post-translationally, proteolytic cleavage, leading to a truncated form, is facilitated by SLC31A2 and initiated preferentially by CTSL and to a minor extend by CTSB in endolysosomal compartments. A post-CTSL/cathepsin L processing occurs to yield to the fully truncated form. Sulfenylated at Cys-188 after stimulation with VEGFA, which induces SLC31A1-KDR disulfide bond formation and their co-internalization to early endosomes, driving to a sustained VEGFR2 signaling.

The protein localises to the cell membrane. It localises to the early endosome membrane. Its subcellular location is the recycling endosome membrane. It is found in the apical cell membrane. The protein resides in the late endosome membrane. The protein localises to the basolateral cell membrane. It carries out the reaction Ag(+)(out) = Ag(+)(in). The catalysed reaction is Cu(+)(out) = Cu(+)(in). Functionally, uniporter that mediates the transport of copper(1+) from the extracellular space to the cytoplasm, across the plasma membrane and delivers directly copper(1+) to specific chaperone such as ATOX1, via a copper(1+)- mediated transient interaction between the C-terminal domain and a copper(1+) chaperone, thus controlling intracellular copper(1+) levels. May function in copper(1+) import from the apical membrane thus may drive intestinal copper absorption. The copper(1+) transport mechanism is sodium-independent, saturable and of high-affinity. Also mediates the uptake of silver(1+). May function in the influx of the platinum-containing chemotherapeutic agents. The platinum-containing chemotherapeutic agents uptake is saturable. In vitro, mediates the transport of cadmium(2+) into cells. Also participates in the first step of copper(2+) acquisition by cells through a direct transfer of copper(2+) from copper(2+) carriers in blood, such as ALB to the N-terminal domain of SLC31A1, leading to copper(2+) reduction and probably followed by copper(1+) stabilization. In addition, functions as a redox sensor to promote angiogenesis in endothelial cells, in a copper(1+) transport independent manner, by transmitting the VEGF-induced ROS signal through a sulfenylation at Cys-189 leadin g to a subsequent disulfide bond formation between SLC31A1 and KDR. The SLC31A1-KDR complex is then co-internalized to early endosomes, driving a sustained VEGFR2 signaling. Its function is as follows. Mobilizes copper(1+) out of the endosomal compartment, making copper(1+) available for export out of the cells. The chain is High affinity copper uptake protein 1 from Sus scrofa (Pig).